The following is a 206-amino-acid chain: Probable GTP-binding protein EngB (206 aa).

In terms of domain architecture, EngB-type G spans 29 to 201 (ILPEVAVVGR…MIMIQDALND (173 aa)). Residues 37–44 (GRSNVGKS), 64–68 (GKTQA), 82–85 (DLPG), 149–152 (TKID), and 180–182 (YSV) each bind GTP. The Mg(2+) site is built by S44 and T66.

The protein belongs to the TRAFAC class TrmE-Era-EngA-EngB-Septin-like GTPase superfamily. EngB GTPase family. Mg(2+) is required as a cofactor.

Necessary for normal cell division and for the maintenance of normal septation. This is Probable GTP-binding protein EngB from Protochlamydia amoebophila (strain UWE25).